The following is a 232-amino-acid chain: uncharacterized protein (232 aa).

The first 32 residues, 1-32 (MTTSKIATAFKTATFALAAGAVALGLASPADA), serve as a signal peptide directing secretion.

This is an uncharacterized protein from Mycobacterium bovis (strain ATCC BAA-935 / AF2122/97).